The sequence spans 385 residues: Alkanesulfonate monooxygenase 2 (385 aa).

This sequence belongs to the SsuD family.

It carries out the reaction an alkanesulfonate + FMNH2 + O2 = an aldehyde + FMN + sulfite + H2O + 2 H(+). In terms of biological role, catalyzes the desulfonation of aliphatic sulfonates. The sequence is that of Alkanesulfonate monooxygenase 2 (ssuD2) from Mesorhizobium japonicum (strain LMG 29417 / CECT 9101 / MAFF 303099) (Mesorhizobium loti (strain MAFF 303099)).